The chain runs to 188 residues: V-type proton ATPase subunit E (188 aa).

This sequence belongs to the V-ATPase E subunit family.

In terms of biological role, produces ATP from ADP in the presence of a proton gradient across the membrane. The chain is V-type proton ATPase subunit E from Dictyoglomus thermophilum (strain ATCC 35947 / DSM 3960 / H-6-12).